A 390-amino-acid chain; its full sequence is Homoserine O-succinyltransferase (390 aa).

One can recognise an AB hydrolase-1 domain in the interval 59-369 (NAVLVCHALN…PHGHDAFLLD (311 aa)). S165 acts as the Nucleophile in catalysis. Residue R235 coordinates substrate. Active-site residues include D330 and H363. A substrate-binding site is contributed by D364.

The protein belongs to the AB hydrolase superfamily. MetX family. In terms of assembly, homodimer.

It is found in the cytoplasm. The enzyme catalyses L-homoserine + succinyl-CoA = O-succinyl-L-homoserine + CoA. The protein operates within amino-acid biosynthesis; L-methionine biosynthesis via de novo pathway; O-succinyl-L-homoserine from L-homoserine: step 1/1. Its function is as follows. Transfers a succinyl group from succinyl-CoA to L-homoserine, forming succinyl-L-homoserine. This is Homoserine O-succinyltransferase from Cupriavidus metallidurans (strain ATCC 43123 / DSM 2839 / NBRC 102507 / CH34) (Ralstonia metallidurans).